Here is a 119-residue protein sequence, read N- to C-terminus: MSTPATTTQAFSLKTRQPIADEDALLTEEDRILKQATKGEDCTTRRRACKNCVCGRAELERKLEAEGKLPPEGITMPPGGCGNCAKGDAFRCANCPFLGQPAFDSTEDGKVKLNLTDDI.

The disordered stretch occupies residues 33–119; that stretch reads LKQATKGEDC…KVKLNLTDDI (87 aa). Cys42, Cys49, Cys52, and Cys54 together coordinate [2Fe-2S] cluster. A fe-S binding site A region spans residues 42-54; it reads CTTRRRACKNCVC. 4 residues coordinate [4Fe-4S] cluster: Cys81, Cys84, Cys92, and Cys95. 2 short sequence motifs (cx2C motif) span residues 81–84 and 92–95; these read CGNC and CANC. The segment at 81-95 is fe-S binding site B; the sequence is CGNCAKGDAFRCANC.

The protein belongs to the anamorsin family. As to quaternary structure, monomer. It depends on [2Fe-2S] cluster as a cofactor. [4Fe-4S] cluster serves as cofactor.

Its subcellular location is the cytoplasm. The protein resides in the mitochondrion intermembrane space. Its function is as follows. Component of the cytosolic iron-sulfur (Fe-S) protein assembly (CIA) machinery. Required for the maturation of extramitochondrial Fe-S proteins. Part of an electron transfer chain functioning in an early step of cytosolic Fe-S biogenesis, facilitating the de novo assembly of a [4Fe-4S] cluster on the cytosolic Fe-S scaffold complex. Electrons are transferred from NADPH via a FAD- and FMN-containing diflavin oxidoreductase. Together with the diflavin oxidoreductase, also required for the assembly of the diferric tyrosyl radical cofactor of ribonucleotide reductase (RNR), probably by providing electrons for reduction during radical cofactor maturation in the catalytic small subunit. The chain is Anamorsin homolog from Leishmania braziliensis.